Here is a 306-residue protein sequence, read N- to C-terminus: D-glucosamine-6-phosphate 4-epimerase (306 aa).

The region spanning 19 to 153 (DIPGVKTAEK…TGSNYRVQDL (135 aa)) is the SIS domain. Glu200 serves as the catalytic Proton acceptor. Catalysis depends on His216, which acts as the Proton donor. The active-site Proton acceptor is the Arg296.

It belongs to the PGI/PMI family.

The enzyme catalyses D-glucosamine 6-phosphate = D-galactosamine 6-phosphate. Functionally, involved in the synthesis of UDP-N-acetylgalactosamine (UDP-GalNAc). Catalyzes the conversion of glucosamine-6-phosphate (GlcN-6-P) to galactosamine-6-phosphate (GalN-6-P). This chain is D-glucosamine-6-phosphate 4-epimerase, found in Sulfolobus acidocaldarius (strain ATCC 33909 / DSM 639 / JCM 8929 / NBRC 15157 / NCIMB 11770).